The chain runs to 120 residues: Large ribosomal subunit protein bL19 (120 aa).

It belongs to the bacterial ribosomal protein bL19 family.

In terms of biological role, this protein is located at the 30S-50S ribosomal subunit interface and may play a role in the structure and function of the aminoacyl-tRNA binding site. This Chlorobium limicola (strain DSM 245 / NBRC 103803 / 6330) protein is Large ribosomal subunit protein bL19.